Here is a 316-residue protein sequence, read N- to C-terminus: B3 domain-containing protein Os04g0581400 (316 aa).

Residues Met-1–Asp-100 are disordered. Over residues Glu-13–Glu-36 the composition is skewed to acidic residues. Over residues Thr-46–Ser-77 the composition is skewed to low complexity. Residues Gly-88–Gly-98 show a composition bias toward gly residues. The TF-B3 DNA-binding region spans Phe-110–Ala-215. The segment at Gly-239 to Ser-290 is disordered. A compositionally biased stretch (low complexity) spans Arg-253–Thr-270.

It localises to the nucleus. The sequence is that of B3 domain-containing protein Os04g0581400 from Oryza sativa subsp. japonica (Rice).